The primary structure comprises 917 residues: Smoothelin (917 aa).

Residue alanine 2 is modified to N-acetylalanine. Residues 24 to 89 (LAERRRIRSA…ARLAGQLESM (66 aa)) are a coiled coil. Positions 157–456 (EVPEREEQEQ…AVGTAEPGGS (300 aa)) are disordered. The segment covering 177–188 (PEGTSQDVTTVT) has biased composition (polar residues). Composition is skewed to low complexity over residues 193 to 210 (APPG…SSPT) and 220 to 232 (PAEA…EVPG). The span at 233–243 (SPEPPPSPPKT) shows a compositional bias: pro residues. Residues 244-258 (TSPEPQESPTLPSTE) are compositionally biased toward low complexity. Over residues 298–326 (RSLSVLSPRQPAQNRESTPLASGPSSFQR) the composition is skewed to polar residues. Phosphoserine is present on residues serine 299, serine 301, and serine 304. Over residues 329–338 (SVRDRVHKFT) the composition is skewed to basic and acidic residues. Serine 341 is subject to Phosphoserine. Threonine 351 is subject to Phosphothreonine. Position 357 is a phosphoserine (serine 357). Phosphothreonine is present on residues threonine 360 and threonine 373. Residues 363–392 (RLLGPSLTSTTPASSSSGSSSRGPSDTSSR) show a composition bias toward low complexity. A phosphoserine mark is found at serine 503, serine 514, serine 523, and serine 576. 2 disordered regions span residues 560 to 580 (ANGA…PLSA) and 617 to 767 (QRKR…RKAM). Positions 603 to 630 (EERKLIRAALRELRQRKRDQRDKERERR) form a coiled coil. Residues 617–640 (QRKRDQRDKERERRLQEARGRPGE) show a composition bias toward basic and acidic residues. Over residues 676 to 689 (NDGTRTARTTTVES) the composition is skewed to polar residues. The segment covering 701 to 720 (STMMQTKTFSSSSSSKKMGS) has biased composition (low complexity). Serine 729 is subject to Phosphoserine. Basic and acidic residues predominate over residues 738–750 (LEKRQAEKKKELM). Residue serine 792 is modified to Phosphoserine. The Calponin-homology (CH) domain occupies 799–906 (NSIKQMLLDW…YVQSLYNHLR (108 aa)).

This sequence belongs to the smoothelin family. In terms of tissue distribution, smooth muscle; contractile or vascular (for the long form).

Its subcellular location is the cytoplasm. It is found in the cytoskeleton. Structural protein of the cytoskeleton. This chain is Smoothelin (SMTN), found in Homo sapiens (Human).